A 547-amino-acid polypeptide reads, in one-letter code: Probable bifunctional tRNA threonylcarbamoyladenosine biosynthesis protein (547 aa).

Residues 1–329 (MKNTFILGIE…FRTDDVNVTW (329 aa)) form a kae1 region. Fe cation-binding residues include histidine 113, histidine 117, and tyrosine 134. L-threonylcarbamoyladenylate is bound by residues 134–138 (YVSGA), aspartate 166, glycine 179, glutamate 183, and asparagine 262. A Fe cation-binding site is contributed by aspartate 290. In terms of domain architecture, Protein kinase spans 340-547 (EISPEAFLRA…EEIKKRARYA (208 aa)). ATP-binding positions include 355-363 (LDNGAEAVI) and lysine 377. The active-site Proton acceptor; for kinase activity is the aspartate 464.

This sequence in the N-terminal section; belongs to the KAE1 / TsaD family. It in the C-terminal section; belongs to the protein kinase superfamily. Tyr protein kinase family. BUD32 subfamily. Component of the KEOPS complex that consists of Kae1, Bud32, Cgi121 and Pcc1; the whole complex dimerizes. The cofactor is Fe(2+).

It is found in the cytoplasm. It catalyses the reaction L-seryl-[protein] + ATP = O-phospho-L-seryl-[protein] + ADP + H(+). The enzyme catalyses L-threonyl-[protein] + ATP = O-phospho-L-threonyl-[protein] + ADP + H(+). It carries out the reaction L-threonylcarbamoyladenylate + adenosine(37) in tRNA = N(6)-L-threonylcarbamoyladenosine(37) in tRNA + AMP + H(+). Required for the formation of a threonylcarbamoyl group on adenosine at position 37 (t(6)A37) in tRNAs that read codons beginning with adenine. Is a component of the KEOPS complex that is probably involved in the transfer of the threonylcarbamoyl moiety of threonylcarbamoyl-AMP (TC-AMP) to the N6 group of A37. The Kae1 domain likely plays a direct catalytic role in this reaction. The Bud32 domain probably displays kinase activity that regulates Kae1 function. This Methanosarcina acetivorans (strain ATCC 35395 / DSM 2834 / JCM 12185 / C2A) protein is Probable bifunctional tRNA threonylcarbamoyladenosine biosynthesis protein.